The primary structure comprises 330 residues: DNA-directed RNA polymerase subunit alpha (330 aa).

Positions 1-231 (MQTNLLKPKT…EQLAVFAQLE (231 aa)) are alpha N-terminal domain (alpha-NTD). Positions 250-330 (FDPILLRPVD…SWPPAGLDKR (81 aa)) are alpha C-terminal domain (alpha-CTD).

It belongs to the RNA polymerase alpha chain family. Homodimer. The RNAP catalytic core consists of 2 alpha, 1 beta, 1 beta' and 1 omega subunit. When a sigma factor is associated with the core the holoenzyme is formed, which can initiate transcription.

The enzyme catalyses RNA(n) + a ribonucleoside 5'-triphosphate = RNA(n+1) + diphosphate. Functionally, DNA-dependent RNA polymerase catalyzes the transcription of DNA into RNA using the four ribonucleoside triphosphates as substrates. This is DNA-directed RNA polymerase subunit alpha from Polaromonas naphthalenivorans (strain CJ2).